The chain runs to 261 residues: Triosephosphate isomerase (261 aa).

Position 10–12 (10–12) interacts with substrate; the sequence is NWK. His100 functions as the Electrophile in the catalytic mechanism. The Proton acceptor role is filled by Glu172. Residues Gly178, Ser218, and 239–240 contribute to the substrate site; that span reads GG.

It belongs to the triosephosphate isomerase family. Homodimer.

The protein resides in the cytoplasm. The catalysed reaction is D-glyceraldehyde 3-phosphate = dihydroxyacetone phosphate. It participates in carbohydrate biosynthesis; gluconeogenesis. Its pathway is carbohydrate degradation; glycolysis; D-glyceraldehyde 3-phosphate from glycerone phosphate: step 1/1. In terms of biological role, involved in the gluconeogenesis. Catalyzes stereospecifically the conversion of dihydroxyacetone phosphate (DHAP) to D-glyceraldehyde-3-phosphate (G3P). The polypeptide is Triosephosphate isomerase (Mycolicibacterium vanbaalenii (strain DSM 7251 / JCM 13017 / BCRC 16820 / KCTC 9966 / NRRL B-24157 / PYR-1) (Mycobacterium vanbaalenii)).